Consider the following 377-residue polypeptide: Actin-related protein T2 (377 aa).

This sequence belongs to the actin family.

Its subcellular location is the cytoplasm. It is found in the cytoskeleton. The chain is Actin-related protein T2 (ACTRT2) from Homo sapiens (Human).